A 787-amino-acid chain; its full sequence is ISWI one complex protein 3 (787 aa).

Polar residues predominate over residues Met1 to Gln22. Disordered regions lie at residues Met1–Gln137, Ile672–Asp693, and Thr749–Thr787. The segment covering Asp40–Asp50 has biased composition (low complexity). Positions Lys79–Ala92 are enriched in basic residues. Basic and acidic residues predominate over residues Ser100–Gln137. Positions Gln675–Pro689 are enriched in polar residues. Acidic residues predominate over residues Tyr751–Phe777. A compositionally biased stretch (basic and acidic residues) spans Asp778–Thr787.

Component of the ISW1A complex, which at least consists of ISW1 and IOC3.

The protein localises to the nucleus. Functions as a component of the ISW1A complex, which acts in remodeling the chromatin by catalyzing an ATP-dependent alteration in the structure of nucleosomal DNA. The ISW1A complex represses gene expression at initiation through specific positioning of a promoter proximal dinucleosome. This chain is ISWI one complex protein 3 (IOC3), found in Saccharomyces cerevisiae (strain ATCC 204508 / S288c) (Baker's yeast).